The chain runs to 275 residues: uncharacterized protein (275 aa).

An HTH araC/xylS-type domain is found at 171–268; it reads KMVCEFLEEH…GLTPKQYMKI (98 aa). 2 consecutive DNA-binding regions (H-T-H motif) follow at residues 188 to 209 and 235 to 258; these read NDLSELTGWSKYHLLRSFTKQK and PIDAAFQTGFSDQSHMTKFFKRQV.

This is an uncharacterized protein from Bacillus subtilis (strain 168).